A 1179-amino-acid chain; its full sequence is ATP-dependent helicase/deoxyribonuclease subunit B (1179 aa).

Belongs to the helicase family. AddB/RexB type 2 subfamily. In terms of assembly, heterodimer of AddA and RexB. It depends on Mg(2+) as a cofactor.

Functionally, the heterodimer acts as both an ATP-dependent DNA helicase and an ATP-dependent, dual-direction single-stranded exonuclease. Recognizes the chi site generating a DNA molecule suitable for the initiation of homologous recombination. This subunit has 5' -&gt; 3' nuclease activity but not helicase activity. This is ATP-dependent helicase/deoxyribonuclease subunit B from Lacticaseibacillus casei (strain BL23) (Lactobacillus casei).